Consider the following 85-residue polypeptide: Large ribosomal subunit protein bL31B (85 aa).

The protein belongs to the bacterial ribosomal protein bL31 family. Type B subfamily. Part of the 50S ribosomal subunit.

The polypeptide is Large ribosomal subunit protein bL31B (Macrococcus caseolyticus (strain JCSC5402) (Macrococcoides caseolyticum)).